The chain runs to 329 residues: MLSLESEVLTRHLPLFANKSILLFGDVRDRFADQIKANAKSVAVFSSYFDYARQYADVSFGLYCEIKAELAVFYWTKNKQECQYQLLQWLSQVDVGQEMLIIGENRAGVRSVEKLLEPYGNIAKIDSARRCGLYHFELQSVPDFDGKKFWKSYRLQDLNIFALPAVFSSAELDGGTQLLLSTFNKADRLKGKVLDLGCGAGVIGASLKQQFEKIKLTMSDIHAMALESSRHTLAENALDGTVVASDVFSNIEERFDLIVSNPPFHDGIDTAYRAVEDLIAQAKQRLNRGGELRIVANAFLPYPDLLDKAFGSHQVIAKSNKFKVYSAKA.

The protein belongs to the methyltransferase superfamily. RsmC family. In terms of assembly, monomer.

Its subcellular location is the cytoplasm. It catalyses the reaction guanosine(1207) in 16S rRNA + S-adenosyl-L-methionine = N(2)-methylguanosine(1207) in 16S rRNA + S-adenosyl-L-homocysteine + H(+). Its function is as follows. Specifically methylates the guanine in position 1207 of 16S rRNA in the 30S particle. This Actinobacillus pleuropneumoniae serotype 3 (strain JL03) protein is Ribosomal RNA small subunit methyltransferase C.